Consider the following 358-residue polypeptide: Probable protein phosphatase 2C 68 (358 aa).

The 279-residue stretch at 74–352 (RHGAASVAGR…DNISVVVVDL (279 aa)) folds into the PPM-type phosphatase domain. Positions 117, 118, 298, and 343 each coordinate Mn(2+).

Belongs to the PP2C family. Requires Mg(2+) as cofactor. Mn(2+) is required as a cofactor.

The protein resides in the nucleus. It is found in the cytoplasm. The protein localises to the cytosol. It carries out the reaction O-phospho-L-seryl-[protein] + H2O = L-seryl-[protein] + phosphate. The catalysed reaction is O-phospho-L-threonyl-[protein] + H2O = L-threonyl-[protein] + phosphate. In terms of biological role, involved in the regulation of abiotic stress responses. Acts as a negative regulator of abscisic acid (ABA) signaling and positive regulator of abiotic stress signaling. May be involved in panicle development. This is Probable protein phosphatase 2C 68 from Oryza sativa subsp. japonica (Rice).